Consider the following 175-residue polypeptide: Nucleoside-triphosphatase THEP1 (175 aa).

ATP contacts are provided by residues 16-23 and 103-110; these read GMPGVGKT and VAFIDEIG.

Belongs to the THEP1 NTPase family.

It catalyses the reaction a ribonucleoside 5'-triphosphate + H2O = a ribonucleoside 5'-diphosphate + phosphate + H(+). Its function is as follows. Has nucleotide phosphatase activity towards ATP, GTP, CTP, TTP and UTP. May hydrolyze nucleoside diphosphates with lower efficiency. This Pyrobaculum calidifontis (strain DSM 21063 / JCM 11548 / VA1) protein is Nucleoside-triphosphatase THEP1.